A 101-amino-acid polypeptide reads, in one-letter code: NADH-quinone oxidoreductase subunit K (101 aa).

3 helical membrane-spanning segments follow: residues 2–22, 29–49, and 63–83; these read ISLNHYLIVAALMFVIGLVGV, IMLFFSTEILLNAANVALVAI, and MFIIAIAASEMAVGLGLLILW.

It belongs to the complex I subunit 4L family. As to quaternary structure, NDH-1 is composed of 14 different subunits. Subunits NuoA, H, J, K, L, M, N constitute the membrane sector of the complex.

It localises to the cell inner membrane. The catalysed reaction is a quinone + NADH + 5 H(+)(in) = a quinol + NAD(+) + 4 H(+)(out). Its function is as follows. NDH-1 shuttles electrons from NADH, via FMN and iron-sulfur (Fe-S) centers, to quinones in the respiratory chain. The immediate electron acceptor for the enzyme in this species is believed to be ubiquinone. Couples the redox reaction to proton translocation (for every two electrons transferred, four hydrogen ions are translocated across the cytoplasmic membrane), and thus conserves the redox energy in a proton gradient. The sequence is that of NADH-quinone oxidoreductase subunit K from Campylobacter hominis (strain ATCC BAA-381 / DSM 21671 / CCUG 45161 / LMG 19568 / NCTC 13146 / CH001A).